A 296-amino-acid chain; its full sequence is Mitochondrial arginine transporter BAC2 (296 aa).

Solcar repeat units lie at residues 13–93, 104–187, and 198–282; these read GREF…FSRS, PSYR…VRER, and ENLR…ALRC. The next 6 helical transmembrane spans lie at 16 to 36, 70 to 90, 110 to 130, 162 to 181, 204 to 224, and 260 to 280; these read FVAG…LDTL, AAPL…YAIF, ALGG…VELI, GLTI…FWTY, LVAG…LDVV, and TAVA…EVAL.

This sequence belongs to the mitochondrial carrier (TC 2.A.29) family. As to expression, high expression in flowers, stamens, petals and pollen. Expressed in roots, leaves and stems.

Its subcellular location is the mitochondrion inner membrane. With respect to regulation, inhibited by mercuric chloride. Mitochondrial arginine transporter that catalyzes the counter-exchange of arginine with lysine, ornithine, arginine, histidine and citrulline. Substrate preference in reconstituted proteoliposomes is arginine &gt; homoarginine &gt; citrulline &gt; histidine &gt; lysine &gt; ornithine. May be involved in the delivery of arginine, released from seed reserves, to mitochondrial arginase and the export of ornithine. May contribute to proline accumulation in response to hyperosmotic stress. This Arabidopsis thaliana (Mouse-ear cress) protein is Mitochondrial arginine transporter BAC2 (BAC2).